The chain runs to 303 residues: Zinc transporter ZIP9-A (303 aa).

A helical transmembrane segment spans residues 7 to 27 (ISLLSLAMLVGCYVSGIIPLA). Asn29 carries an N-linked (GlcNAc...) asparagine glycan. Transmembrane regions (helical) follow at residues 35–55 (LKLV…AVII), 102–122 (AYIG…DQIG), 142–162 (ITTT…LGAA), 172–192 (LIVF…LVSF), and 206–226 (HLLV…LGLS). N-linked (GlcNAc...) asparagine glycosylation is present at Asn237. 2 helical membrane passes run 240–260 (GVAM…HVLP) and 282–302 (LEVC…IGHQ).

This sequence belongs to the ZIP transporter (TC 2.A.5) family.

The protein resides in the golgi apparatus. The protein localises to the trans-Golgi network membrane. It localises to the cell membrane. Its subcellular location is the cytoplasm. It is found in the perinuclear region. The protein resides in the mitochondrion. The protein localises to the nucleus. It carries out the reaction Zn(2+)(in) = Zn(2+)(out). Transports zinc ions across cell and organelle membranes into the cytoplasm and regulates intracellular zinc homeostasis. Participates in the zinc ions efflux out of the secretory compartments. Regulates intracellular zinc level, resulting in the enhancement of AKT1 and MAPK3/MAPK1 (Erk1/2) phosphorylation in response to the BCR activation. Also functions as a membrane androgen receptor that mediates, through a G protein, the non-classical androgen signaling pathway, characterized by the activation of MAPK3/MAPK1 (Erk1/2) and transcription factors CREB1 or ATF1. Moreover, has dual functions as a membrane-bound androgen receptor and as an androgen-dependent zinc transporter both of which are mediated through an inhibitory G protein (Gi) that mediates both MAP kinase and zinc signaling leading to the androgen-dependent apoptotic process. The sequence is that of Zinc transporter ZIP9-A (slc39a9-a) from Xenopus laevis (African clawed frog).